We begin with the raw amino-acid sequence, 397 residues long: Zinc finger transcription factor family protein 30 (397 aa).

The interval 1-40 (MKLEDDKIHSPTNTEEEGYGSDVEVENGTDISGSKGGSGV) is disordered. A compositionally biased stretch (acidic residues) spans 14-27 (TEEEGYGSDVEVEN). 3 consecutive C2H2-type zinc fingers follow at residues 51–74 (FRCS…MQAH), 78–102 (YKCT…KQHH), and 107–125 (YMCR…LHIH).

It is found in the nucleus. In Caenorhabditis elegans, this protein is Zinc finger transcription factor family protein 30 (ztf-30).